The following is a 553-amino-acid chain: MSDIALTVSILALVAVVGLFIGNVKFRGVGLGIGGVLFGGIIVGHFVSQAGMTLSSDMLHVIQEFGLILFVYTIGIQVGPGFFASLRVSGLRLNLFAVLIVIIGGLVTAILHKLFDIPLPVVLGIFSGAVTNTPALGAGQQILRDLGTPMAMVDQMGMSYAMAYPFGICGILFTMWMLRVIFRVNVETEAQQHESTRTNGGALIRTINIRVENPNLHNLAIKDVPILNGDKVICSRLKREETLKVPSPETVIQLGDLLHLVGQPADLHNAQLVIGQEVDTSLSTKGTDLRVERVVVTNENVLGKRIRDLHFKERYDVVISRLNRAGVELVASSDISLQFGDILNLVGRPSAIDAVANVLGNVQQKLQQVQMLPVFIGIGLGVLLGSIPVFVPGFPAALKLGLAGGPLIMALILGRIGSIGKLYWFMPPSANLALRELGIVLFLSVVGLKSGGDFIHTLVDGEGLSWIGYGALITAVPLITVGILARMLAKMNYLTMCGMLAGSMTDPPALAFANNLHPTSGAAALSYATVYPLVMFLRIITPQLLAVLFWSIG.

The next 5 helical transmembrane spans lie at 4–24 (IALT…IGNV), 28–48 (GVGL…HFVS), 65–85 (FGLI…FFAS), 95–115 (LFAV…HKLF), and 158–178 (MSYA…MWML). 2 RCK C-terminal domains span residues 191–276 (QQHE…VIGQ) and 279–361 (DTSL…VLGN). 6 helical membrane passes run 371 to 391 (MLPV…PVFV), 393 to 413 (GFPA…ALIL), 439 to 459 (IVLF…HTLV), 464 to 484 (LSWI…VGIL), 493 to 513 (YLTM…LAFA), and 533 to 553 (LVMF…WSIG).

This sequence belongs to the AAE transporter (TC 2.A.81) family. YidE subfamily.

The protein resides in the cell membrane. The sequence is that of Putative transport protein YidE from Escherichia coli O127:H6 (strain E2348/69 / EPEC).